The chain runs to 176 residues: dCTP deaminase (176 aa).

Residues 99-104 (RSTLAR) and Asp115 each bind dCTP. Catalysis depends on Glu125, which acts as the Proton donor/acceptor. Residue Gln163 participates in dCTP binding.

This sequence belongs to the dCTP deaminase family. Homotrimer.

It catalyses the reaction dCTP + H2O + H(+) = dUTP + NH4(+). Its pathway is pyrimidine metabolism; dUMP biosynthesis; dUMP from dCTP (dUTP route): step 1/2. In terms of biological role, catalyzes the deamination of dCTP to dUTP. The chain is dCTP deaminase from Pyrobaculum islandicum (strain DSM 4184 / JCM 9189 / GEO3).